The primary structure comprises 361 residues: Alanine racemase (361 aa).

Residue K34 is the Proton acceptor; specific for D-alanine of the active site. K34 is subject to N6-(pyridoxal phosphate)lysine. R129 is a substrate binding site. Y256 (proton acceptor; specific for L-alanine) is an active-site residue. Residue M304 coordinates substrate.

This sequence belongs to the alanine racemase family. In terms of assembly, homodimer. The cofactor is pyridoxal 5'-phosphate.

The catalysed reaction is L-alanine = D-alanine. It participates in amino-acid biosynthesis; D-alanine biosynthesis; D-alanine from L-alanine: step 1/1. In terms of biological role, catalyzes the interconversion of L-alanine and D-alanine. May also act on other amino acids. The protein is Alanine racemase (alr) of Corynebacterium glutamicum (strain ATCC 13032 / DSM 20300 / JCM 1318 / BCRC 11384 / CCUG 27702 / LMG 3730 / NBRC 12168 / NCIMB 10025 / NRRL B-2784 / 534).